The primary structure comprises 400 residues: Argininosuccinate synthase (400 aa).

Residue 8 to 16 (AYSGGLDTS) coordinates ATP. Positions 87 and 92 each coordinate L-citrulline. Residue Gly117 coordinates ATP. Residues Thr119, Asn123, and Asp124 each coordinate L-aspartate. L-citrulline is bound at residue Asn123. Arg127, Ser175, Glu259, and Tyr271 together coordinate L-citrulline.

The protein belongs to the argininosuccinate synthase family. Type 1 subfamily. In terms of assembly, homotetramer.

Its subcellular location is the cytoplasm. The catalysed reaction is L-citrulline + L-aspartate + ATP = 2-(N(omega)-L-arginino)succinate + AMP + diphosphate + H(+). It functions in the pathway amino-acid biosynthesis; L-arginine biosynthesis; L-arginine from L-ornithine and carbamoyl phosphate: step 2/3. This is Argininosuccinate synthase from Frankia casuarinae (strain DSM 45818 / CECT 9043 / HFP020203 / CcI3).